A 363-amino-acid polypeptide reads, in one-letter code: MTNSAPVTPRRDLADAPLLAAARGETPRHTPVWFMRQAGRSLPEYRKVREGIPMLQSCLTPDLVCEITAQPVRRHGVDAAILFSDIVLPLHAAGVGLDIVAGTGPVVAEPVRTAADVAALPSLAPEQVSKVGDAVGLLLDELGSTPLIGFAGAPFTLASYLVEGGPSRNHERTKALMHSEPATWHALLEKLADTTLTFLRTQLAAGVDAIQLFDSWAGALSLRDYREFVLPHSRRIFEGVAETPGAAGVPKIHFGVGTGELLGAMRSAGADVVGVDWRVPLDTAAQRLREAGPDQGAPVVQGNLDPAVLFAGWEAVEREVRRILAEGRAAGGHIFNLGHGVLPSTDPGVLTRVVELVHAESAR.

Substrate is bound by residues 36 to 40 (RQAGR), aspartate 85, tyrosine 160, serine 215, and histidine 339.

The protein belongs to the uroporphyrinogen decarboxylase family. As to quaternary structure, homodimer.

It is found in the cytoplasm. The enzyme catalyses uroporphyrinogen III + 4 H(+) = coproporphyrinogen III + 4 CO2. It participates in porphyrin-containing compound metabolism; protoporphyrin-IX biosynthesis; coproporphyrinogen-III from 5-aminolevulinate: step 4/4. Catalyzes the decarboxylation of four acetate groups of uroporphyrinogen-III to yield coproporphyrinogen-III. The sequence is that of Uroporphyrinogen decarboxylase from Saccharopolyspora erythraea (strain ATCC 11635 / DSM 40517 / JCM 4748 / NBRC 13426 / NCIMB 8594 / NRRL 2338).